The sequence spans 386 residues: Protein RecA (386 aa).

ATP is bound at residue Gly-76 to Thr-83. Residues Phe-362–Asn-386 form a disordered region.

Belongs to the RecA family.

The protein localises to the cytoplasm. In terms of biological role, can catalyze the hydrolysis of ATP in the presence of single-stranded DNA, the ATP-dependent uptake of single-stranded DNA by duplex DNA, and the ATP-dependent hybridization of homologous single-stranded DNAs. It interacts with LexA causing its activation and leading to its autocatalytic cleavage. This chain is Protein RecA, found in Corynebacterium efficiens (strain DSM 44549 / YS-314 / AJ 12310 / JCM 11189 / NBRC 100395).